Here is an 86-residue protein sequence, read N- to C-terminus: Large ribosomal subunit protein bL27 (86 aa).

The disordered stretch occupies residues 1-26 (MATKKAGGSSRNGRDSAGRRLGVKQS).

This sequence belongs to the bacterial ribosomal protein bL27 family.

This is Large ribosomal subunit protein bL27 from Rickettsia canadensis (strain McKiel).